We begin with the raw amino-acid sequence, 276 residues long: NADPH-dependent 7-cyano-7-deazaguanine reductase (276 aa).

A substrate-binding site is contributed by 83–85 (IES). Residue 85–86 (SK) participates in NADPH binding. Cys-184 functions as the Thioimide intermediate in the catalytic mechanism. Asp-191 (proton donor) is an active-site residue. 223-224 (HE) lines the substrate pocket. 252-253 (RG) contributes to the NADPH binding site.

This sequence belongs to the GTP cyclohydrolase I family. QueF type 2 subfamily. In terms of assembly, homodimer.

It is found in the cytoplasm. The catalysed reaction is 7-aminomethyl-7-carbaguanine + 2 NADP(+) = 7-cyano-7-deazaguanine + 2 NADPH + 3 H(+). It participates in tRNA modification; tRNA-queuosine biosynthesis. Functionally, catalyzes the NADPH-dependent reduction of 7-cyano-7-deazaguanine (preQ0) to 7-aminomethyl-7-deazaguanine (preQ1). The polypeptide is NADPH-dependent 7-cyano-7-deazaguanine reductase (Pseudomonas syringae pv. tomato (strain ATCC BAA-871 / DC3000)).